Consider the following 200-residue polypeptide: Integrin beta-1-binding protein 1 (200 aa).

Basic residues predominate over residues 1 to 10; sequence MFRKGKKRHS. The segment at 1–55 is disordered; sequence MFRKGKKRHSSSSSQSSEISTKSKSVDSSLGGLSRSSTVASLDTDSTKSSGQSNS. Positions 6-7 match the Nuclear localization signal motif; the sequence is KK. Positions 11–29 are enriched in low complexity; it reads SSSSQSSEISTKSKSVDSS. The segment covering 34–55 has biased composition (polar residues); sequence SRSSTVASLDTDSTKSSGQSNS. T38 is modified (phosphothreonine; by CaMK2). Phosphoserine is present on S41. The 143-residue stretch at 58 to 200 folds into the PID domain; it reads DTCAEFRIKY…FDSVLTSDKS (143 aa). Residues 136 to 139 are interaction with KRIT1; that stretch reads YLII. The tract at residues 139–141 is interaction with ITGB1; the sequence is IRM.

As to quaternary structure, found in a complex, at least composed of ITGB1BP1, KRIT1 and RAP1A. Interacts (via C-terminal region) with ITGB1 (via C-terminal cytoplasmic tail); the interaction prevents talin TLN1 binding to ITGB1 and KRIT1 and ITGB1 compete for the same binding site. Interacts with KRIT1 (via N-terminal NPXY motif); the interaction induces the opening conformation of KRIT1 and KRIT1 and ITGB1 compete for the same binding site. Isoform 2 does not interact with ITGB1. Interacts with CDC42 (GTP- or GDP-bound form); the interaction is increased with the CDC42-membrane bound forms and prevents both CDC42 activation and cell spreading. Interacts (via C-terminal domain region) with NME2. Interacts with FERMT2 and RAC1. Interacts (via N-terminus and PTB domain) with ROCK1. In terms of processing, phosphorylation at Thr-38 seems to enhance integrin alpha5beta1-mediated cell adhesion. The degree of phosphorylation is regulated by integrin-dependent cell-matrix interaction. Expressed in the brain.

The protein resides in the nucleus. Its subcellular location is the cytoplasm. It is found in the cytoskeleton. It localises to the cell membrane. The protein localises to the cell projection. The protein resides in the lamellipodium. Its subcellular location is the ruffle. Its function is as follows. Key regulator of the integrin-mediated cell-matrix interaction signaling by binding to the ITGB1 cytoplasmic tail and preventing the activation of integrin alpha-5/beta-1 (heterodimer of ITGA5 and ITGB1) by talin or FERMT1. Plays a role in cell proliferation, differentiation, spreading, adhesion and migration in the context of mineralization and bone development and angiogenesis. Stimulates cellular proliferation in a fibronectin-dependent manner. Involved in the regulation of beta-1 integrin-containing focal adhesion (FA) site dynamics by controlling its assembly rate during cell adhesion; inhibits beta-1 integrin clustering within FA by directly competing with talin TLN1, and hence stimulates osteoblast spreading and migration in a fibronectin- and/or collagen-dependent manner. Acts as a guanine nucleotide dissociation inhibitor (GDI) by regulating Rho family GTPases during integrin-mediated cell matrix adhesion; reduces the level of active GTP-bound form of both CDC42 and RAC1 GTPases upon cell adhesion to fibronectin. Stimulates the release of active CDC42 from the membranes to maintain it in an inactive cytoplasmic pool. Participates in the translocation of the Rho-associated protein kinase ROCK1 to membrane ruffles at cell leading edges of the cell membrane, leading to an increase of myoblast cell migration on laminin. Plays a role in bone mineralization at a late stage of osteoblast differentiation; modulates the dynamic formation of focal adhesions into fibrillar adhesions, which are adhesive structures responsible for fibronectin deposition and fibrillogenesis. Plays a role in blood vessel development; acts as a negative regulator of angiogenesis by attenuating endothelial cell proliferation and migration, lumen formation and sprouting angiogenesis by promoting AKT phosphorylation and inhibiting ERK1/2 phosphorylation through activation of the Notch signaling pathway. Promotes transcriptional activity of the MYC promoter. The protein is Integrin beta-1-binding protein 1 (Itgb1bp1) of Mus musculus (Mouse).